Reading from the N-terminus, the 354-residue chain is Putative Xaa-Pro aminopeptidase (354 aa).

5 residues coordinate Mn(2+): D213, D224, H290, E319, and E333.

Belongs to the peptidase M24B family. Mn(2+) is required as a cofactor.

It catalyses the reaction Release of any N-terminal amino acid, including proline, that is linked to proline, even from a dipeptide or tripeptide.. In Mycoplasma genitalium (strain ATCC 33530 / DSM 19775 / NCTC 10195 / G37) (Mycoplasmoides genitalium), this protein is Putative Xaa-Pro aminopeptidase (pepP).